The chain runs to 299 residues: Acarbose 7(IV)-phosphotransferase (299 aa).

Belongs to the carbohydrate kinase PfkB family.

The catalysed reaction is acarbose + ATP = acarbose 7(IV)-phosphate + ADP + H(+). Its function is as follows. Catalyzes the phosphorylation of the alpha-glucosidase inhibitor acarbose. Phosphorylation of acarbose could be a resistance-like self-protection mechanism. The sequence is that of Acarbose 7(IV)-phosphotransferase from Actinoplanes sp. (strain ATCC 31044 / CBS 674.73 / SE50/110).